Reading from the N-terminus, the 447-residue chain is UDP-N-acetylglucosamine 1-carboxyvinyltransferase (447 aa).

27–28 contributes to the phosphoenolpyruvate binding site; the sequence is KN. Residue Arg-97 participates in UDP-N-acetyl-alpha-D-glucosamine binding. The Proton donor role is filled by Cys-121. The residue at position 121 (Cys-121) is a 2-(S-cysteinyl)pyruvic acid O-phosphothioketal. UDP-N-acetyl-alpha-D-glucosamine-binding positions include 126-130, Asp-314, and Val-336; that span reads RPVDL.

Belongs to the EPSP synthase family. MurA subfamily.

It is found in the cytoplasm. The catalysed reaction is phosphoenolpyruvate + UDP-N-acetyl-alpha-D-glucosamine = UDP-N-acetyl-3-O-(1-carboxyvinyl)-alpha-D-glucosamine + phosphate. It participates in cell wall biogenesis; peptidoglycan biosynthesis. Cell wall formation. Adds enolpyruvyl to UDP-N-acetylglucosamine. This is UDP-N-acetylglucosamine 1-carboxyvinyltransferase from Trichormus variabilis (strain ATCC 29413 / PCC 7937) (Anabaena variabilis).